Reading from the N-terminus, the 568-residue chain is Hemagglutinin-neuraminidase (568 aa).

At 1 to 18 the chain is on the intravirion side; sequence MSGAEGNTNKRTFRAVFR. The helical transmembrane segment at 19–39 threads the bilayer; sequence TLIILITLTILALSAAILYEV. The Virion surface segment spans residues 40–568; the sequence is THTSNGSESN…VPFLREVIIT (529 aa). N-linked (GlcNAc...) asparagine; by host glycosylation is found at Asn44 and Asn111. 3 cysteine pairs are disulfide-bonded: Cys162–Cys186, Cys176–Cys237, and Cys228–Cys241. Positions 224-229 are involved in neuraminidase activity; that stretch reads NRKSCS. Asn268 and Asn280 each carry an N-linked (GlcNAc...) asparagine; by host glycan. Intrachain disulfides connect Cys334/Cys455, Cys366/Cys376, and Cys449/Cys459. Asn382 is a glycosylation site (N-linked (GlcNAc...) asparagine; by host). The N-linked (GlcNAc...) asparagine; by host glycan is linked to Asn513. An intrachain disulfide couples Cys531 to Cys542.

This sequence belongs to the paramyxoviruses hemagglutinin-neuraminidase family. As to quaternary structure, homotetramer; composed of disulfide-linked homodimers.

The protein resides in the virion membrane. Its subcellular location is the host cell membrane. The catalysed reaction is Hydrolysis of alpha-(2-&gt;3)-, alpha-(2-&gt;6)-, alpha-(2-&gt;8)- glycosidic linkages of terminal sialic acid residues in oligosaccharides, glycoproteins, glycolipids, colominic acid and synthetic substrates.. In terms of biological role, attaches the virus to sialic acid-containing cell receptors and thereby initiating infection. Binding of HN protein to the receptor induces a conformational change that allows the F protein to trigger virion/cell membranes fusion. Its function is as follows. Neuraminidase activity ensures the efficient spread of the virus by dissociating the mature virions from the neuraminic acid containing glycoproteins. This chain is Hemagglutinin-neuraminidase (HN), found in Simiiformes (SV41).